The primary structure comprises 664 residues: Protein cueball (664 aa).

The N-terminal stretch at 1–21 is a signal peptide; sequence MRNLGIAVTFAVLLVIGYVTA. Residues 22–552 lie on the Extracellular side of the membrane; that stretch reads LEWDAVVTTD…VTYCKNSFNR (531 aa). N-linked (GlcNAc...) asparagine glycosylation is found at Asn-40, Asn-140, and Asn-188. 3 LDL-receptor class B repeats span residues 115–157, 168–211, and 212–257; these read RKLY…ENHD, RHLY…DHYN, and NRIY…NSQY. 3 consecutive EGF-like domains span residues 367–399, 402–438, and 473–510; these read EIPICNNFCVHGECVVGADSRPMCKCHAEFEGE, DRNICDGYCLNNGRCALSATGQRSCTCSKNFSGARCE, and EEYTCNNYCLHDGTCILNNDTMLVECRCGSEYTGKRCE. 8 disulfides stabilise this stretch: Cys-371/Cys-380, Cys-375/Cys-390, Cys-406/Cys-416, Cys-410/Cys-426, Cys-428/Cys-437, Cys-477/Cys-487, Cys-481/Cys-498, and Cys-500/Cys-509. N-linked (GlcNAc...) asparagine glycosylation is present at Asn-431. N-linked (GlcNAc...) asparagine glycosylation is present at Asn-491. An N-linked (GlcNAc...) asparagine glycan is attached at Asn-551. A helical transmembrane segment spans residues 553–573; the sequence is TVVYVSLAFTASLVTLVTILC. The Cytoplasmic segment spans residues 574–664; it reads TVRRMYERNR…KLPSCVAEKN (91 aa).

It belongs to the cueball family.

The protein localises to the cell membrane. In terms of biological role, has a role in spermatogenesis and oogenesis. In Aedes aegypti (Yellowfever mosquito), this protein is Protein cueball.